The chain runs to 201 residues: IMP cyclohydrolase (201 aa).

The protein belongs to the archaeal IMP cyclohydrolase family.

The enzyme catalyses IMP + H2O = 5-formamido-1-(5-phospho-D-ribosyl)imidazole-4-carboxamide. It functions in the pathway purine metabolism; IMP biosynthesis via de novo pathway; IMP from 5-formamido-1-(5-phospho-D-ribosyl)imidazole-4-carboxamide: step 1/1. In terms of biological role, catalyzes the cyclization of 5-formylamidoimidazole-4-carboxamide ribonucleotide to IMP. The protein is IMP cyclohydrolase of Methanococcus maripaludis (strain C6 / ATCC BAA-1332).